We begin with the raw amino-acid sequence, 416 residues long: Cyclin-L1-1 (416 aa).

A disordered region spans residues 286-416 (KCTAGSANND…DSSKDRRRHH (131 aa)). Composition is skewed to basic and acidic residues over residues 304 to 315 (PHEKATDSKKSG), 328 to 374 (SYER…DKLK), 384 to 393 (RLKDSGGHSD), and 401 to 410 (RDRDYRDSSK).

This sequence belongs to the cyclin family. Cyclin L subfamily. As to quaternary structure, forms a complex with CDKG1. Interacts with MOS4 and associates with the spliceosome.

The protein localises to the nucleus. In terms of biological role, cognate cyclin for CDKG1. Required for synapsis and male meiosis, and for the proper splicing of specific resistance (R) genes. Involved in regulation of DNA methylation and transcriptional silencing. This chain is Cyclin-L1-1 (CYCL1-1), found in Arabidopsis thaliana (Mouse-ear cress).